Reading from the N-terminus, the 607-residue chain is Phosphomethylpyrimidine synthase (607 aa).

Substrate-binding positions include Asn-216, Met-245, Tyr-274, His-310, 330 to 332, 371 to 374, and Glu-410; these read SRG and DGLR. Zn(2+) is bound at residue His-414. Tyr-437 serves as a coordination point for substrate. His-478 serves as a coordination point for Zn(2+). 3 residues coordinate [4Fe-4S] cluster: Cys-558, Cys-561, and Cys-566.

The protein belongs to the ThiC family. As to quaternary structure, homodimer. [4Fe-4S] cluster serves as cofactor.

The catalysed reaction is 5-amino-1-(5-phospho-beta-D-ribosyl)imidazole + S-adenosyl-L-methionine = 4-amino-2-methyl-5-(phosphooxymethyl)pyrimidine + CO + 5'-deoxyadenosine + formate + L-methionine + 3 H(+). It functions in the pathway cofactor biosynthesis; thiamine diphosphate biosynthesis. In terms of biological role, catalyzes the synthesis of the hydroxymethylpyrimidine phosphate (HMP-P) moiety of thiamine from aminoimidazole ribotide (AIR) in a radical S-adenosyl-L-methionine (SAM)-dependent reaction. The polypeptide is Phosphomethylpyrimidine synthase (Agrobacterium fabrum (strain C58 / ATCC 33970) (Agrobacterium tumefaciens (strain C58))).